A 257-amino-acid polypeptide reads, in one-letter code: Golgi SNAP receptor complex member 1-2 (257 aa).

The Cytoplasmic segment spans residues 1–235 (MTESSLDLQE…GSIKRKRSRD (235 aa)). Phosphoserine is present on N51. Positions 113–147 (TQKLARHRDILHEYTQEFRRIKGNINSLREHAELL) form a coiled coil. A helical; Anchor for type IV membrane protein membrane pass occupies residues 236–256 (TLILSAVIAACTLFLIIYWLS). A topological domain (vesicular) is located at residue K257.

Belongs to the GOSR1 family. In terms of assembly, component of several multiprotein Golgi SNARE complexes.

It is found in the golgi apparatus membrane. The protein resides in the endoplasmic reticulum membrane. In terms of biological role, involved in transport from the ER to the Golgi apparatus as well as in intra-Golgi transport. It belongs to a super-family of proteins called t-SNAREs or soluble NSF (N-ethylmaleimide-sensitive factor) attachment protein receptor. In Arabidopsis thaliana (Mouse-ear cress), this protein is Golgi SNAP receptor complex member 1-2 (GOS12).